A 500-amino-acid chain; its full sequence is Lysine--tRNA ligase (500 aa).

2 residues coordinate Mg(2+): Glu410 and Glu417.

The protein belongs to the class-II aminoacyl-tRNA synthetase family. As to quaternary structure, homodimer. Mg(2+) is required as a cofactor.

It is found in the cytoplasm. It carries out the reaction tRNA(Lys) + L-lysine + ATP = L-lysyl-tRNA(Lys) + AMP + diphosphate. The chain is Lysine--tRNA ligase from Shewanella denitrificans (strain OS217 / ATCC BAA-1090 / DSM 15013).